A 165-amino-acid polypeptide reads, in one-letter code: RNA pyrophosphohydrolase (165 aa).

Positions 6–149 constitute a Nudix hydrolase domain; sequence GYRPNVGIII…KQSVYHQALT (144 aa). Positions 38 to 59 match the Nudix box motif; that stretch reads GGVRENETPQQAVFRELKEEVG.

It belongs to the Nudix hydrolase family. RppH subfamily. A divalent metal cation is required as a cofactor.

Functionally, accelerates the degradation of transcripts by removing pyrophosphate from the 5'-end of triphosphorylated RNA, leading to a more labile monophosphorylated state that can stimulate subsequent ribonuclease cleavage. The protein is RNA pyrophosphohydrolase of Hydrogenovibrio crunogenus (strain DSM 25203 / XCL-2) (Thiomicrospira crunogena).